We begin with the raw amino-acid sequence, 603 residues long: Serine protease 56 (603 aa).

An N-terminal signal peptide occupies residues 1–19 (MLLAVLLLLPLPSSWFAHG). A disordered region spans residues 64–96 (SHECRGSGRPRPQALLQDPPEPGPCGERRPSTA). The N-linked (GlcNAc...) asparagine glycan is linked to Asn-97. One can recognise a Peptidase S1 domain in the interval 105-337 (IVGGSAAPPG…FKDWLQEQMS (233 aa)). Cys-130 and Cys-146 form a disulfide bridge. Residues His-145 and Asp-191 each act as charge relay system in the active site. 3 cysteine pairs are disulfide-bonded: Cys-225–Cys-292, Cys-256–Cys-271, and Cys-282–Cys-313. Catalysis depends on Ser-286, which acts as the Charge relay system. Disordered stretches follow at residues 442–474 (PARELRLHSGSRAAGTRFPKRRPEPRGEANGCP) and 573–603 (EGPWMDVGQGPGLERKGHHPLNPQVPPARQP).

This sequence belongs to the peptidase S1 family. Expressed neural retina, cornea, sclera and optic nerve.

Its function is as follows. Serine protease required during eye development. The sequence is that of Serine protease 56 (PRSS56) from Homo sapiens (Human).